The primary structure comprises 613 residues: Putative two-component response regulator ARR21 (613 aa).

Positions 17–131 (NVMVVDDDHV…DLTKIYQFAL (115 aa)) constitute a Response regulatory domain. Residue Asp-68 is modified to 4-aspartylphosphate. The span at 178 to 195 (KSDSRTVNSTNGSCVSTD) shows a compositional bias: polar residues. The tract at residues 178 to 223 (KSDSRTVNSTNGSCVSTDGSRKNRKRKPNGGPSDDGESMSQPAKKK) is disordered. The Nuclear localization signal signature appears at 221-224 (KKKK). Residues 224 to 274 (KIQWTDSLHDLFLQAIRHIGLDKAVPKKILAFMSVPYLTRENVASHLQKYR) constitute a DNA-binding region (myb-like GARP).

Belongs to the ARR family. Type-B subfamily. Binds the target DNA as a monomer. Two-component system major event consists of a His-to-Asp phosphorelay between a sensor histidine kinase (HK) and a response regulator (RR). In plants, the His-to-Asp phosphorelay involves an additional intermediate named Histidine-containing phosphotransfer protein (HPt). This multistep phosphorelay consists of a His-Asp-His-Asp sequential transfer of a phosphate group between first a His and an Asp of the HK protein, followed by the transfer to a conserved His of the HPt protein and finally the transfer to an Asp in the receiver domain of the RR protein. Mainly expressed in siliques. Also found in germinating seedlings, stems, flowers and roots, but not in rosette leaves.

The protein resides in the nucleus. Its function is as follows. Putative transcriptional activator that binds specifically to the DNA sequence 5'-[AG]GATT-3'. Functions as a response regulator involved in His-to-Asp phosphorelay signal transduction system. Phosphorylation of the Asp residue in the receiver domain activates the ability of the protein to promote the transcription of target genes. Could directly activate some type-A response regulators in response to cytokinins. This is Putative two-component response regulator ARR21 (ARR21) from Arabidopsis thaliana (Mouse-ear cress).